The chain runs to 1097 residues: MALHLHRAERTDLLADGLGALLADPQPDPFAQELVLVAARGVERWLSQRLSLVLGCGPGRADGVCAGIAFRNPQSLIAEITGTLDDDPWSPEALAWPLLAVIDASLDEPWCRTLASHLGHFATTDAEAELRRGRRYSVARRLAGLFASYARQRPGLLAAWLDGDLGELPGDLAWQPPLWRALVTTVGADPPHVRHDKTIARLRDGPADLPARLSLFGHTRLACTDVQLLDALAVHHDLHLWLPHPSDELWRALAGFQGADGLLPRRQDTSRRAAQHPLLETLGRDVRELQRALPAARATDEFLGATTKPDTLLGWLQADIAGNAPRPAGRSLSDADRSVQVHACHGPARQIDVLREVLLGLLEDDPTLQPRDIVVMCPDIDTYAPLIVAGFGLGEVAGDCHPAHRLRVRLADRALTQTNPLLSVAAELLTIAETRATASQLLNLAQAAPVRAKFGFADDDLDTITTWVRESNIRWGFDPTHRRRYGLDTVVHNTWRFGLDRILTGVAMSEDSQAWLDTALPLDDVGSNRVELAGRLAEFVERLHHVVGGLSGARPLVAWLDALATGIDLLTACNDGWQRAQVQREFADVLARAGSRAAPLLRLPDVRALLDAQLAGRPTRANFRTGTLTVCTMVPMRSVPHRVVCLVGLDDGVFPRLSHPDGDDVLAREPMTGERDIRSEDRQLLLDAIGAATQTLVITYTGADERTGQPRPPAVPLAELLDALDQTTSAPVRERILVTHPLQPFDRKNVTPGALLGAKPFTFDPAALAAAQAAAGKRCPPTAFISGRLPAPPAADVTLADLLDFFKDPVKGFFRALDYTLPWDVDTVEDSIPVQVDALAEWTVGERMLRDMLRGLHPDDAAHSEWRRGTLPPGRLGVRRAKEIRNRARDLAAAALAHRDGHGQAHDVDVDLGDGRRLSGTVTPVFGGRTVSVTYSKLAPKHVLPAWIGLVTLAAQEPGREWSALCIGRSKTRNHIARRLFVPPPDPVAVLRELVLLYDAGRREPLPLPLKTSCAWAQARRDGQDPYPPARECWQTNRFRPGDDDAPAHVRAWGPRAPFEVLLGKPRAGEEVAGEETRLGALAARLWLPLLAAEGSV.

The protein belongs to the RecC family. In terms of assembly, heterotrimer of RecB, RecC and RecD. All subunits contribute to DNA-binding.

Its function is as follows. A helicase/nuclease that prepares dsDNA breaks (DSB) for recombinational DNA repair. Binds to DSBs and unwinds DNA via a highly rapid and processive ATP-dependent bidirectional helicase activity. Holoenzyme degrades any linearized DNA that is unable to undergo homologous recombination. In the holoenzyme this subunit recognizes the wild-type Chi sequence, and when added to isolated RecB increases its ATP-dependent helicase processivity. Unlike the case in E.coli, suppresses RecA-dependent homologous recombination, is instead required for single-strand annealing pathway repair of DSB. The chain is RecBCD enzyme subunit RecC from Mycobacterium tuberculosis (strain ATCC 25618 / H37Rv).